We begin with the raw amino-acid sequence, 514 residues long: 2,3-bisphosphoglycerate-independent phosphoglycerate mutase (514 aa).

Positions 15 and 65 each coordinate Mn(2+). Catalysis depends on serine 65, which acts as the Phosphoserine intermediate. Residues histidine 126, 156–157 (RD), arginine 188, arginine 194, 261–264 (RADR), and lysine 335 each bind substrate. Positions 403, 407, 444, 445, and 462 each coordinate Mn(2+).

It belongs to the BPG-independent phosphoglycerate mutase family. In terms of assembly, monomer. The cofactor is Mn(2+).

The catalysed reaction is (2R)-2-phosphoglycerate = (2R)-3-phosphoglycerate. It participates in carbohydrate degradation; glycolysis; pyruvate from D-glyceraldehyde 3-phosphate: step 3/5. Catalyzes the interconversion of 2-phosphoglycerate and 3-phosphoglycerate. The protein is 2,3-bisphosphoglycerate-independent phosphoglycerate mutase of Syntrophotalea carbinolica (strain DSM 2380 / NBRC 103641 / GraBd1) (Pelobacter carbinolicus).